A 219-amino-acid polypeptide reads, in one-letter code: Inner membrane protein YccA (219 aa).

Residues 1 to 22 are Periplasmic-facing; the sequence is MDRIVSSSHDRTSLLSTHKVLR. Transmembrane regions (helical) follow at residues 23–43 and 44–64; these read NTYF…TAST and VLML…GLMF. The Periplasmic segment spans residues 65–73; that stretch reads LTYKTANKP. The helical transmembrane segment at 74–94 threads the bilayer; the sequence is TGIISAFAFTGFLGYILGPIL. Residues 95-104 are Cytoplasmic-facing; the sequence is NTYLSAGMGD. A helical transmembrane segment spans residues 105 to 125; that stretch reads VIAMALGGTALVFFCCSAYVL. The Periplasmic portion of the chain corresponds to 126–133; the sequence is TTRKDMSF. A helical membrane pass occupies residues 134-154; sequence LGGMLMAGIVVVLIGMVANIF. The Cytoplasmic portion of the chain corresponds to 155 to 157; the sequence is LQL. Residues 158–178 form a helical membrane-spanning segment; sequence PALHLAISAVFILISSGAILF. Topologically, residues 179 to 195 are periplasmic; that stretch reads ETSNIIHGGETNYIRAT. The helical transmembrane segment at 196–216 threads the bilayer; sequence VSLYVSLYNIFVSLLSILGFA. Over 217-219 the chain is Cytoplasmic; sequence SRD.

Belongs to the BI1 family.

It is found in the cell inner membrane. The polypeptide is Inner membrane protein YccA (yccA) (Escherichia coli O6:H1 (strain CFT073 / ATCC 700928 / UPEC)).